Reading from the N-terminus, the 337-residue chain is Tert-butanol monooxygenase / tert-amyl alcohol desaturase reductase subunit (337 aa).

The FAD-binding FR-type domain occupies 9-114 (KYPKTALNLR…GHPRNNFPLI (106 aa)). A 2Fe-2S ferredoxin-type domain is found at 254–337 (FQIKIASTGT…SKGATLVLDL (84 aa)). [2Fe-2S] cluster-binding residues include Cys288, Cys293, Cys296, and Cys324.

Belongs to the PDR/VanB family. In terms of assembly, this two-component enzyme is composed of an oxygenase (MdpJ) and a reductase (MdpK). [2Fe-2S] cluster is required as a cofactor.

Reductase component of a two-component system involved in the degradation of tertiary alcohols such as tert-butyl alcohol (TBA) and tert-amyl alcohol (TAA). MdpK probably provides electrons via its [2Fe-2S] iron-sulfur cluster to the MdpJ oxygenase subunit. This chain is Tert-butanol monooxygenase / tert-amyl alcohol desaturase reductase subunit, found in Aquincola tertiaricarbonis.